The primary structure comprises 137 residues: Small ribosomal subunit protein uS9 (137 aa).

Belongs to the universal ribosomal protein uS9 family.

This Picosynechococcus sp. (strain ATCC 27264 / PCC 7002 / PR-6) (Agmenellum quadruplicatum) protein is Small ribosomal subunit protein uS9.